Reading from the N-terminus, the 468-residue chain is Asparagine--tRNA ligase (468 aa).

This sequence belongs to the class-II aminoacyl-tRNA synthetase family. As to quaternary structure, homodimer.

The protein resides in the cytoplasm. It catalyses the reaction tRNA(Asn) + L-asparagine + ATP = L-asparaginyl-tRNA(Asn) + AMP + diphosphate + H(+). This is Asparagine--tRNA ligase from Parabacteroides distasonis (strain ATCC 8503 / DSM 20701 / CIP 104284 / JCM 5825 / NCTC 11152).